The following is a 583-amino-acid chain: Aspartate--tRNA(Asp/Asn) ligase (583 aa).

Residue Glu172 participates in L-aspartate binding. An aspartate region spans residues 196 to 199 (QMLK). Arg218 is an L-aspartate binding site. Residues 218 to 220 (RDE) and Gln227 contribute to the ATP site. His446 provides a ligand contact to L-aspartate. ATP is bound at residue Glu480. Arg487 serves as a coordination point for L-aspartate. Position 532-535 (532-535 (GLDR)) interacts with ATP.

The protein belongs to the class-II aminoacyl-tRNA synthetase family. Type 1 subfamily. Homodimer.

It localises to the cytoplasm. The catalysed reaction is tRNA(Asx) + L-aspartate + ATP = L-aspartyl-tRNA(Asx) + AMP + diphosphate. Aspartyl-tRNA synthetase with relaxed tRNA specificity since it is able to aspartylate not only its cognate tRNA(Asp) but also tRNA(Asn). Reaction proceeds in two steps: L-aspartate is first activated by ATP to form Asp-AMP and then transferred to the acceptor end of tRNA(Asp/Asn). The chain is Aspartate--tRNA(Asp/Asn) ligase from Streptococcus mutans serotype c (strain ATCC 700610 / UA159).